We begin with the raw amino-acid sequence, 234 residues long: uncharacterized protein (234 aa).

The tract at residues M1–S23 is disordered.

This is an uncharacterized protein from Caenorhabditis elegans.